Here is a 119-residue protein sequence, read N- to C-terminus: Large ribosomal subunit protein uL18 (119 aa).

It belongs to the universal ribosomal protein uL18 family. As to quaternary structure, part of the 50S ribosomal subunit; part of the 5S rRNA/L5/L18/L25 subcomplex. Contacts the 5S and 23S rRNAs.

This is one of the proteins that bind and probably mediate the attachment of the 5S RNA into the large ribosomal subunit, where it forms part of the central protuberance. The polypeptide is Large ribosomal subunit protein uL18 (Malacoplasma penetrans (strain HF-2) (Mycoplasma penetrans)).